The following is a 77-amino-acid chain: Conotoxin ArMKLT2-0122 (77 aa).

Positions 1–22 (MKLTCVLIVAVLFLTACQLIAA) are cleaved as a signal peptide. Residues 23 to 44 (DDSRDLKRFSRRKMRDGMLNTK) constitute a propeptide that is removed on maturation. 3 cysteine pairs are disulfide-bonded: cysteine 50-cysteine 65, cysteine 57-cysteine 68, and cysteine 64-cysteine 73.

This sequence belongs to the conotoxin O1 superfamily. Expressed by the venom duct.

It is found in the secreted. The polypeptide is Conotoxin ArMKLT2-0122 (Conus arenatus (Sand-dusted cone)).